The sequence spans 119 residues: Large ribosomal subunit protein bL20 (119 aa).

It belongs to the bacterial ribosomal protein bL20 family.

Binds directly to 23S ribosomal RNA and is necessary for the in vitro assembly process of the 50S ribosomal subunit. It is not involved in the protein synthesizing functions of that subunit. This Geobacillus kaustophilus (strain HTA426) protein is Large ribosomal subunit protein bL20.